The sequence spans 81 residues: Photosystem I iron-sulfur center (81 aa).

4Fe-4S ferredoxin-type domains follow at residues 2–31 (SHSV…MVPW) and 39–68 (IASS…IRVY). [4Fe-4S] cluster contacts are provided by C11, C14, C17, C21, C48, C51, C54, and C58.

In terms of assembly, the cyanobacterial PSI reaction center is composed of one copy each of PsaA,B,C,D,E,F,I,J,K,L,M and X, and forms trimeric complexes. [4Fe-4S] cluster is required as a cofactor.

It is found in the cellular thylakoid membrane. It catalyses the reaction reduced [plastocyanin] + hnu + oxidized [2Fe-2S]-[ferredoxin] = oxidized [plastocyanin] + reduced [2Fe-2S]-[ferredoxin]. Its function is as follows. Apoprotein for the two 4Fe-4S centers FA and FB of photosystem I (PSI); essential for photochemical activity. FB is the terminal electron acceptor of PSI, donating electrons to ferredoxin. The C-terminus interacts with PsaA/B/D and helps assemble the protein into the PSI complex. Required for binding of PsaD and PsaE to PSI. PSI is a plastocyanin/cytochrome c6-ferredoxin oxidoreductase, converting photonic excitation into a charge separation, which transfers an electron from the donor P700 chlorophyll pair to the spectroscopically characterized acceptors A0, A1, FX, FA and FB in turn. Functionally, mutant proteins with a 3Fe-4S center are unable to reconstitute PSI activity in vivo. The sequence is that of Photosystem I iron-sulfur center from Synechocystis sp. (strain ATCC 27184 / PCC 6803 / Kazusa).